The chain runs to 296 residues: Ribosomal RNA small subunit methyltransferase H (296 aa).

Residues glycine 30 to histidine 32, aspartate 49, phenylalanine 77, aspartate 95, and glutamine 102 each bind S-adenosyl-L-methionine.

Belongs to the methyltransferase superfamily. RsmH family.

The protein resides in the cytoplasm. It carries out the reaction cytidine(1402) in 16S rRNA + S-adenosyl-L-methionine = N(4)-methylcytidine(1402) in 16S rRNA + S-adenosyl-L-homocysteine + H(+). Functionally, specifically methylates the N4 position of cytidine in position 1402 (C1402) of 16S rRNA. The polypeptide is Ribosomal RNA small subunit methyltransferase H (Hydrogenobaculum sp. (strain Y04AAS1)).